The primary structure comprises 269 residues: Phosphoribosylformylglycinamidine synthase subunit PurQ (269 aa).

The region spanning 5 to 262 is the Glutamine amidotransferase type-1 domain; it reads VLVMSGYGIN…IESNLQIFKN (258 aa). C95 functions as the Nucleophile in the catalytic mechanism. Residues H222, E224, and E232 contribute to the active site.

As to quaternary structure, part of the FGAM synthase complex composed of 1 PurL, 1 PurQ and 2 PurS subunits.

It is found in the cytoplasm. It carries out the reaction N(2)-formyl-N(1)-(5-phospho-beta-D-ribosyl)glycinamide + L-glutamine + ATP + H2O = 2-formamido-N(1)-(5-O-phospho-beta-D-ribosyl)acetamidine + L-glutamate + ADP + phosphate + H(+). The enzyme catalyses L-glutamine + H2O = L-glutamate + NH4(+). Its pathway is purine metabolism; IMP biosynthesis via de novo pathway; 5-amino-1-(5-phospho-D-ribosyl)imidazole from N(2)-formyl-N(1)-(5-phospho-D-ribosyl)glycinamide: step 1/2. Part of the phosphoribosylformylglycinamidine synthase complex involved in the purines biosynthetic pathway. Catalyzes the ATP-dependent conversion of formylglycinamide ribonucleotide (FGAR) and glutamine to yield formylglycinamidine ribonucleotide (FGAM) and glutamate. The FGAM synthase complex is composed of three subunits. PurQ produces an ammonia molecule by converting glutamine to glutamate. PurL transfers the ammonia molecule to FGAR to form FGAM in an ATP-dependent manner. PurS interacts with PurQ and PurL and is thought to assist in the transfer of the ammonia molecule from PurQ to PurL. The sequence is that of Phosphoribosylformylglycinamidine synthase subunit PurQ from Methanococcus maripaludis (strain C5 / ATCC BAA-1333).